Reading from the N-terminus, the 260-residue chain is Adenosylcobinamide-GDP ribazoletransferase (260 aa).

Helical transmembrane passes span 40–60 (AFPFAGLLIGFVPAVTLLLLL), 64–84 (TDPLVAALVALSVQALVTGAL), 117–137 (YGAIALILSFAIRAAALAAII), 142–162 (PLAAALAIPAVAALSRGAIAW), 188–208 (HFALVSAGLLAALLIWPPFGL), and 210–230 (PLVAGLLVAGVAGFAFTVFIR).

This sequence belongs to the CobS family. It depends on Mg(2+) as a cofactor.

It localises to the cell inner membrane. The enzyme catalyses alpha-ribazole + adenosylcob(III)inamide-GDP = adenosylcob(III)alamin + GMP + H(+). It catalyses the reaction alpha-ribazole 5'-phosphate + adenosylcob(III)inamide-GDP = adenosylcob(III)alamin 5'-phosphate + GMP + H(+). It functions in the pathway cofactor biosynthesis; adenosylcobalamin biosynthesis; adenosylcobalamin from cob(II)yrinate a,c-diamide: step 7/7. Joins adenosylcobinamide-GDP and alpha-ribazole to generate adenosylcobalamin (Ado-cobalamin). Also synthesizes adenosylcobalamin 5'-phosphate from adenosylcobinamide-GDP and alpha-ribazole 5'-phosphate. The sequence is that of Adenosylcobinamide-GDP ribazoletransferase from Rhizobium etli (strain ATCC 51251 / DSM 11541 / JCM 21823 / NBRC 15573 / CFN 42).